The following is a 175-amino-acid chain: Protein ppBat (175 aa).

2 residues coordinate Zn(2+): Cys-74 and Cys-111. Residues Asn-161 and Trp-164 each contribute to the riboflavin site.

As to quaternary structure, homodimer.

Its function is as follows. Binds flavin derivatives, such as lumichrome, riboflavin, FMN, and FAD. May act as a flavin storage protein. Appears to lack proteolytic or chaperone activities. The protein is Protein ppBat of Bacteroides thetaiotaomicron (strain ATCC 29148 / DSM 2079 / JCM 5827 / CCUG 10774 / NCTC 10582 / VPI-5482 / E50).